Reading from the N-terminus, the 357-residue chain is MAAAAKPNNLSLVVHGPGDLRLENYPIPEPGPNEVLLRMHSVGICGSDVHYWEYGRIGNFIVKKPMVLGHEASGTVEKVGSSVKHLKPGDRVAIEPGAPRENDEFCKMGRYNLSPSIFFCATPPDDGNLCRFYKHNAAFCYKLPDNVTFEEGALIEPLSVGIHACRRGGVTLGHKVLVCGAGPIGMVTLLVAKAMGAAQVVVTDLSATRLSKAKEIGADLVLQISKESPQEIARKVEGQLGCKPEVTIECTGAEASIQAGIYATRSGGNLVLVGLGSEMTTVPLLHAAIREVDIKGVFRYCNTWPVAISMLASKSVNVKPLVTHRFPLEKALEAFETFKKGLGLKIMLKCDPSDQNP.

Residue Ala2 is modified to N-acetylalanine. Cys45 lines the Zn(2+) pocket. Residue Tyr51 participates in substrate binding. Positions 70 and 71 each coordinate Zn(2+). Residue Glu156 coordinates substrate. NAD(+) contacts are provided by Ile184, Asp204, and Arg209. Phosphoserine is present on residues Ser211 and Ser225. Residues 273–275 and 297–299 contribute to the NAD(+) site; these read VGL and VFR. Residues Arg299 and Tyr300 each contribute to the substrate site.

The protein belongs to the zinc-containing alcohol dehydrogenase family. In terms of assembly, homotetramer. The cofactor is Zn(2+). As to expression, expressed in liver. Expressed in kidney and epithelial cells of both benign and malignant prostate tissue. Expressed in epididymis (at protein level).

The protein resides in the mitochondrion membrane. It localises to the cell projection. The protein localises to the cilium. Its subcellular location is the flagellum. The enzyme catalyses keto-D-fructose + NADH + H(+) = D-sorbitol + NAD(+). The catalysed reaction is L-threitol + NAD(+) = L-erythrulose + NADH + H(+). It carries out the reaction xylitol + NAD(+) = D-xylulose + NADH + H(+). It catalyses the reaction ribitol + NAD(+) = D-ribulose + NADH + H(+). The enzyme catalyses (R,R)-butane-2,3-diol + NAD(+) = (R)-acetoin + NADH + H(+). The catalysed reaction is L-iditol + NAD(+) = keto-L-sorbose + NADH + H(+). Inhibited by CP-166,572, an inhibitor that is competitive with fructose. Also competitively inhibited by phenanthroline and 4-methylpyrazole in vitro. Its function is as follows. Polyol dehydrogenase that catalyzes the reversible NAD(+)-dependent oxidation of various sugar alcohols. Is mostly active with D-sorbitol (D-glucitol), L-threitol, xylitol and ribitol as substrates, leading to the C2-oxidized products D-fructose, L-erythrulose, D-xylulose, and D-ribulose, respectively. Is a key enzyme in the polyol pathway that interconverts glucose and fructose via sorbitol, which constitutes an important alternate route for glucose metabolism. The polyol pathway is believed to be involved in the etiology of diabetic complications, such as diabetic neuropathy and retinopathy, induced by hyperglycemia. May play a role in sperm motility by using sorbitol as an alternative energy source for sperm motility. May have a more general function in the metabolism of secondary alcohols since it also catalyzes the stereospecific oxidation of (2R,3R)-2,3-butanediol. To a lesser extent, can also oxidize L-arabinitol, galactitol and D-mannitol and glycerol in vitro. Oxidizes neither ethanol nor other primary alcohols. Cannot use NADP(+) as the electron acceptor. This Homo sapiens (Human) protein is Sorbitol dehydrogenase (SORD).